The chain runs to 136 residues: Transcription antitermination protein NusB (136 aa).

Belongs to the NusB family.

In terms of biological role, involved in transcription antitermination. Required for transcription of ribosomal RNA (rRNA) genes. Binds specifically to the boxA antiterminator sequence of the ribosomal RNA (rrn) operons. In Kineococcus radiotolerans (strain ATCC BAA-149 / DSM 14245 / SRS30216), this protein is Transcription antitermination protein NusB.